The sequence spans 2138 residues: Protein virilizer homolog (2138 aa).

Disordered regions lie at residues 1503–1574, 1638–1664, 1855–1881, 2013–2035, and 2058–2094; these read RLPQ…SMHV, NPTP…DDLQ, PVIP…SSGG, PMQP…QGVS, and YYHP…QESG. Residues 1528-1541 are compositionally biased toward polar residues; it reads ENSSVDIPTQNSIQ. Composition is skewed to polar residues over residues 1862 to 1881 and 2025 to 2035; these read DSLS…SSGG and QISQPSEQGVS.

Belongs to the vir family. Interacts with MTB, FIP37 and HAKAI. Associates with MTA, MTB, FIP37 and HAKAI to form the m6A writer complex which is essential for adenosine methylation at specific mRNA sequences.

The protein localises to the nucleus speckle. It localises to the nucleus. The protein resides in the nucleoplasm. Its function is as follows. Subunit of the N6-methyltransferase complex, a multiprotein complex that mediates N6-methyladenosine (m6A) methylation at the 5'-[AG]GAC-3' consensus sites of some mRNAs. Associates with MTA, MTB, FIP37 and HAKAI to form the m6A writer complex which is essential for adenosine methylation at specific mRNA sequences. N6-methyladenosine (m6A) plays a role in mRNA stability, processing, translation efficiency and editing. This is Protein virilizer homolog from Arabidopsis thaliana (Mouse-ear cress).